The following is a 473-amino-acid chain: GTPase Der (473 aa).

EngA-type G domains follow at residues 3-167 (FTVA…GKDR) and 203-378 (LRVA…RVWN). GTP-binding positions include 9 to 16 (GRPNVGKS), 56 to 60 (DTAGL), 119 to 122 (NKSE), 209 to 216 (GRPNAGKS), 256 to 260 (DTAGM), and 321 to 324 (NKWD). In terms of domain architecture, KH-like spans 379–463 (KRISTARLNR…PIRIHFRSAE (85 aa)).

Belongs to the TRAFAC class TrmE-Era-EngA-EngB-Septin-like GTPase superfamily. EngA (Der) GTPase family. Associates with the 50S ribosomal subunit.

GTPase that plays an essential role in the late steps of ribosome biogenesis. This is GTPase Der from Rhizobium etli (strain CIAT 652).